A 133-amino-acid polypeptide reads, in one-letter code: Crossover junction endodeoxyribonuclease Hjc (133 aa).

Glu12 contributes to the Mg(2+) binding site. Residue Ser32 is part of the active site. Residues Asp36 and Glu49 each coordinate Mg(2+).

This sequence belongs to the Holliday junction resolvase Hjc family. Homodimer. It depends on Mg(2+) as a cofactor.

It carries out the reaction Endonucleolytic cleavage at a junction such as a reciprocal single-stranded crossover between two homologous DNA duplexes (Holliday junction).. Its function is as follows. A structure-specific endonuclease that resolves Holliday junction (HJ) intermediates during genetic recombination. Cleaves 4-way DNA junctions introducing paired nicks in opposing strands, leaving a 5'-terminal phosphate and a 3'-terminal hydroxyl group that are subsequently ligated to produce recombinant products. The chain is Crossover junction endodeoxyribonuclease Hjc from Methanocaldococcus jannaschii (strain ATCC 43067 / DSM 2661 / JAL-1 / JCM 10045 / NBRC 100440) (Methanococcus jannaschii).